Here is a 310-residue protein sequence, read N- to C-terminus: Putative sugar kinase PH1459 (310 aa).

The ATP site is built by Lys-194, Thr-219, and Gly-224.

The protein belongs to the carbohydrate kinase PfkB family.

In Pyrococcus horikoshii (strain ATCC 700860 / DSM 12428 / JCM 9974 / NBRC 100139 / OT-3), this protein is Putative sugar kinase PH1459.